We begin with the raw amino-acid sequence, 356 residues long: S-adenosylmethionine:tRNA ribosyltransferase-isomerase (356 aa).

This sequence belongs to the QueA family. In terms of assembly, monomer.

It localises to the cytoplasm. It carries out the reaction 7-aminomethyl-7-carbaguanosine(34) in tRNA + S-adenosyl-L-methionine = epoxyqueuosine(34) in tRNA + adenine + L-methionine + 2 H(+). The protein operates within tRNA modification; tRNA-queuosine biosynthesis. Functionally, transfers and isomerizes the ribose moiety from AdoMet to the 7-aminomethyl group of 7-deazaguanine (preQ1-tRNA) to give epoxyqueuosine (oQ-tRNA). This chain is S-adenosylmethionine:tRNA ribosyltransferase-isomerase, found in Xanthomonas campestris pv. campestris (strain B100).